Reading from the N-terminus, the 148-residue chain is NADPH-dependent 7-cyano-7-deazaguanine reductase (148 aa).

Catalysis depends on cysteine 50, which acts as the Thioimide intermediate. Aspartate 57 serves as the catalytic Proton donor. Residues 72–74 and 91–92 contribute to the substrate site; these read VES and HE.

Belongs to the GTP cyclohydrolase I family. QueF type 1 subfamily.

The protein resides in the cytoplasm. It catalyses the reaction 7-aminomethyl-7-carbaguanine + 2 NADP(+) = 7-cyano-7-deazaguanine + 2 NADPH + 3 H(+). Its pathway is tRNA modification; tRNA-queuosine biosynthesis. Catalyzes the NADPH-dependent reduction of 7-cyano-7-deazaguanine (preQ0) to 7-aminomethyl-7-deazaguanine (preQ1). In Helicobacter pylori (strain G27), this protein is NADPH-dependent 7-cyano-7-deazaguanine reductase.